The following is a 291-amino-acid chain: Small ribosomal subunit biogenesis GTPase RsgA (291 aa).

The 159-residue stretch at 63–221 (KNELKRPPVS…IADTPGFSAL (159 aa)) folds into the CP-type G domain. Residues 112-115 (TKKD) and 164-172 (GQSGVGKST) contribute to the GTP site. Zn(2+)-binding residues include cysteine 245, cysteine 250, histidine 252, and cysteine 258.

This sequence belongs to the TRAFAC class YlqF/YawG GTPase family. RsgA subfamily. In terms of assembly, monomer. Associates with 30S ribosomal subunit, binds 16S rRNA. Zn(2+) serves as cofactor.

It localises to the cytoplasm. One of several proteins that assist in the late maturation steps of the functional core of the 30S ribosomal subunit. Helps release RbfA from mature subunits. May play a role in the assembly of ribosomal proteins into the subunit. Circularly permuted GTPase that catalyzes slow GTP hydrolysis, GTPase activity is stimulated by the 30S ribosomal subunit. In Staphylococcus aureus (strain Mu50 / ATCC 700699), this protein is Small ribosomal subunit biogenesis GTPase RsgA.